Reading from the N-terminus, the 110-residue chain is Protein OPG154 (110 aa).

This sequence belongs to the orthopoxvirus OPG154 protein family. Homohexamers, covalently linked. Interacts with OPG144 and OPG153.

The protein localises to the virion. Its function is as follows. Structural protein involved in the envelopment of mature virion (MV) to form the wrapped virion (WV). The wrapping consists of the addition of Golgi membranes to the mature virion. Participates in mature virion (MV) movement within the infected cell. May play an indirect role in MV-cell fusion. This is Protein OPG154 (OPG154) from Homo sapiens (Human).